The primary structure comprises 829 residues: UBA domain-containing protein 8 (829 aa).

In terms of domain architecture, EH 1 spans 10–109 (EQQEFDRLLE…KQAKDDHHIK (100 aa)). The region spanning 43–78 (LPQKILAKIWDYCDQEDKGSLDRNQVYACFRLISQA) is the EF-hand 1 domain. The tract at residues 93 to 121 (GDPPILPKQAKDDHHIKRSSSETADFTPF) is disordered. Residues S112 and S113 each carry the phosphoserine modification. EH domains lie at 129 to 225 (ERSE…AKSE) and 300 to 398 (DRSN…SDDT). The 36-residue stretch at 333–368 (LDSEELARIWDTVDTQDRGYIDKDEFAVAMEIIKLR) folds into the EF-hand 2 domain. Composition is skewed to polar residues over residues 466–506 (SFQD…TQSI) and 574–590 (TIPGSTSAALDDQQTTE). Disordered stretches follow at residues 466–520 (SFQD…VNSS), 574–614 (TIPG…MRKL), and 724–785 (KPQV…QSYE). Residues 602-709 (EPTEEEQEEM…AKIDSIIADS (108 aa)) adopt a coiled-coil conformation. Over residues 728-737 (TPAPPTPAPT) the composition is skewed to pro residues. A compositionally biased stretch (polar residues) spans 764–774 (HANSSTPMNYV). The segment covering 775–785 (SQPESPPQSYE) has biased composition (low complexity). The region spanning 788–828 (QNDNELLQELLSMGFPREKAVIALEATNYDVNEAANILLSS) is the UBA domain.

The chain is UBA domain-containing protein 8 (ucp8) from Schizosaccharomyces pombe (strain 972 / ATCC 24843) (Fission yeast).